A 304-amino-acid polypeptide reads, in one-letter code: Coenzyme PQQ synthesis protein B (304 aa).

It belongs to the PqqB family.

It participates in cofactor biosynthesis; pyrroloquinoline quinone biosynthesis. Its function is as follows. May be involved in the transport of PQQ or its precursor to the periplasm. The protein is Coenzyme PQQ synthesis protein B of Pseudomonas aeruginosa (strain UCBPP-PA14).